Reading from the N-terminus, the 498-residue chain is tRNA-guanine(15) transglycosylase (498 aa).

Asp-85 serves as the catalytic Nucleophile. Residue Asp-120 coordinates substrate. 3 residues coordinate Zn(2+): Cys-275, Cys-277, and Cys-280.

This sequence belongs to the archaeosine tRNA-ribosyltransferase family. It depends on Zn(2+) as a cofactor.

It carries out the reaction guanosine(15) in tRNA + 7-cyano-7-deazaguanine = 7-cyano-7-carbaguanosine(15) in tRNA + guanine. It functions in the pathway tRNA modification; archaeosine-tRNA biosynthesis. In terms of biological role, exchanges the guanine residue with 7-cyano-7-deazaguanine (preQ0) at position 15 in the dihydrouridine loop (D-loop) of archaeal tRNAs. The chain is tRNA-guanine(15) transglycosylase from Sulfolobus acidocaldarius (strain ATCC 33909 / DSM 639 / JCM 8929 / NBRC 15157 / NCIMB 11770).